A 156-amino-acid polypeptide reads, in one-letter code: Ribosomal RNA large subunit methyltransferase H (156 aa).

Residues L73, G104, and 123 to 128 (LSPLTL) each bind S-adenosyl-L-methionine.

Belongs to the RNA methyltransferase RlmH family. As to quaternary structure, homodimer.

The protein localises to the cytoplasm. The enzyme catalyses pseudouridine(1915) in 23S rRNA + S-adenosyl-L-methionine = N(3)-methylpseudouridine(1915) in 23S rRNA + S-adenosyl-L-homocysteine + H(+). Functionally, specifically methylates the pseudouridine at position 1915 (m3Psi1915) in 23S rRNA. This is Ribosomal RNA large subunit methyltransferase H from Photorhabdus laumondii subsp. laumondii (strain DSM 15139 / CIP 105565 / TT01) (Photorhabdus luminescens subsp. laumondii).